The primary structure comprises 88 residues: Probable small nuclear ribonucleoprotein F (88 aa).

The 73-residue stretch at 7-79 (NPKPFLNNLT…VLYVRGVPED (73 aa)) folds into the Sm domain.

It belongs to the snRNP Sm proteins family. SmF/LSm6 subfamily.

Its subcellular location is the nucleus. Functionally, probable common Sm protein, is found in U1 and U2 snRNPs and may be part of the spliceosome. This Arabidopsis thaliana (Mouse-ear cress) protein is Probable small nuclear ribonucleoprotein F.